Consider the following 261-residue polypeptide: tRNA pseudouridine synthase A (261 aa).

The active-site Nucleophile is the aspartate 51. Tyrosine 109 is a binding site for substrate.

It belongs to the tRNA pseudouridine synthase TruA family. Homodimer.

It carries out the reaction uridine(38/39/40) in tRNA = pseudouridine(38/39/40) in tRNA. In terms of biological role, formation of pseudouridine at positions 38, 39 and 40 in the anticodon stem and loop of transfer RNAs. The chain is tRNA pseudouridine synthase A from Shewanella loihica (strain ATCC BAA-1088 / PV-4).